The following is a 449-amino-acid chain: Neurexin-1a-beta (449 aa).

The first 38 residues, 1-38 (MLRLWPGGAPGGLASILLRISLRLALWLPPLTLGSALA), serve as a signal peptide directing secretion. The Extracellular segment spans residues 39-373 (EGPGELYVPQ…EVIRESSSTT (335 aa)). The 202-residue stretch at 71 to 272 (TTYIFGRDGG…DPNVRVEGSA (202 aa)) folds into the Laminin G-like domain. The disordered stretch occupies residues 276–366 (GDMPSSSITP…AKGYPSPEVI (91 aa)). The segment covering 280-311 (SSSITPQSSVSAAGNRSETSPSITDITTTTAS) has biased composition (low complexity). Residues 312 to 322 (NRQGKQTTTPQ) are compositionally biased toward polar residues. The helical transmembrane segment at 374–394 (GMVVGIVAAAALCILILLYAM) threads the bilayer. Over 395–449 (YKYRNRDEGSYHVDESRNYISNSATQPNGAAVKEKPIGVPKNKKDKKNKDKEYYV) the chain is Cytoplasmic. A disordered region spans residues 415–449 (SNSATQPNGAAVKEKPIGVPKNKKDKKNKDKEYYV).

It belongs to the neurexin family.

The protein localises to the membrane. Functionally, neuronal cell surface protein that may be involved in cell recognition and cell adhesion. May play a role in formation or maintenance of synaptic junctions. This Danio rerio (Zebrafish) protein is Neurexin-1a-beta (nrxn1a).